Consider the following 159-residue polypeptide: uncharacterized protein (159 aa).

The protein belongs to the mimivirus L15/L51/R83 family.

This is an uncharacterized protein from Acanthamoeba polyphaga mimivirus (APMV).